The chain runs to 371 residues: Protein RecA (371 aa).

75–82 (GPESSGKT) is an ATP binding site. The segment at 343-371 (KAKDEPIADEDQPIDVVPNFDDQDVEPQN) is disordered.

It belongs to the RecA family.

The protein resides in the cytoplasm. In terms of biological role, can catalyze the hydrolysis of ATP in the presence of single-stranded DNA, the ATP-dependent uptake of single-stranded DNA by duplex DNA, and the ATP-dependent hybridization of homologous single-stranded DNAs. It interacts with LexA causing its activation and leading to its autocatalytic cleavage. The protein is Protein RecA of Corynebacterium urealyticum (strain ATCC 43042 / DSM 7109).